A 407-amino-acid polypeptide reads, in one-letter code: Aurofusarin biosynthesis cluster protein S (407 aa).

The N-terminal stretch at Met1–Thr35 is a signal peptide. 5 N-linked (GlcNAc...) asparagine glycosylation sites follow: Asn52, Asn174, Asn196, Asn274, and Asn312. FAS1 domains follow at residues Asn52–Leu192 and Pro195–Leu365.

Might be part of an extracellular enzyme complex composed of GIP1, aurF, aurO and aurS.

It is found in the secreted. The protein resides in the extracellular space. Its pathway is pigment biosynthesis. Functionally, part of the gene cluster that mediates the biosynthesis of aurofusarin, a red mycelium pigment which is acting as a mycotoxin. The first step is performed by the polyketide synthase which condenses one acetyl-CoA and 6 malonyl-CoA units to form the first intermediate, the cyclic heptaketide and yellow pigment YWA1. The C2 hydroxyl group in the pyrone ring of YWA1 is probably formed during ring closure by an aldol-type cyclization reaction. The dehydratase aurZ then acts as the first tailoring enzyme in the aurofusarin biosynthetic pathway by converting YWA1 to nor-rubrofusarin. Nor-rubrofusarin is then methylated to rubrofusarin by the O-methyltransferase aurJ. Rubrofusarin is then transported across the plasma membrane by the rubrofusarin-specific pump aurT for further enzymatic processing by the extracellular complex composed of GIP1, aurF, aurO and aurS to yield aurofusarin. This chain is Aurofusarin biosynthesis cluster protein S, found in Gibberella zeae (strain ATCC MYA-4620 / CBS 123657 / FGSC 9075 / NRRL 31084 / PH-1) (Wheat head blight fungus).